The chain runs to 329 residues: Fructose-1,6-bisphosphatase class 1 (329 aa).

The Mg(2+) site is built by Glu84, Asp103, Leu105, and Asp106. Substrate is bound by residues 106 to 109, Asn196, and Lys262; that span reads DGSS. Glu268 lines the Mg(2+) pocket.

The protein belongs to the FBPase class 1 family. In terms of assembly, homotetramer. It depends on Mg(2+) as a cofactor.

It localises to the cytoplasm. The catalysed reaction is beta-D-fructose 1,6-bisphosphate + H2O = beta-D-fructose 6-phosphate + phosphate. Its pathway is carbohydrate biosynthesis; gluconeogenesis. This is Fructose-1,6-bisphosphatase class 1 from Shewanella halifaxensis (strain HAW-EB4).